The sequence spans 95 residues: Co-chaperonin GroES (95 aa).

The protein belongs to the GroES chaperonin family. Heptamer of 7 subunits arranged in a ring. Interacts with the chaperonin GroEL.

It localises to the cytoplasm. Its function is as follows. Together with the chaperonin GroEL, plays an essential role in assisting protein folding. The GroEL-GroES system forms a nano-cage that allows encapsulation of the non-native substrate proteins and provides a physical environment optimized to promote and accelerate protein folding. GroES binds to the apical surface of the GroEL ring, thereby capping the opening of the GroEL channel. The protein is Co-chaperonin GroES of Geobacter metallireducens (strain ATCC 53774 / DSM 7210 / GS-15).